We begin with the raw amino-acid sequence, 534 residues long: MALSQCLEDSPGWRTPRKEQDSNLNELYNERHRLALEELVAGGVQSFMGFLKKERMPNFLSEDEIRRVSRAAVVPKTISINGDDSHLDQSGTLDCSSVTYFPEVSDIEPPVLENGWPAFTTGSYRGVTRAVAYFQPSYGECIYSCKEAARRMIRNAKEVIAIVTDSMTDLDIFHDLREACTRRRVPVYILLDQSSVASFLQMCKNLCVHLDELLQMKVRTITGSTYYMRSGARITGKVHERFMLIDGNKVATGSYRFNWTDGKLNSSNLIELSGQITEKFDEEFRILYAQSLPLPVNTRAPSSARNCSLYDHLVLKAPGTPPSYLARTTKPQAERLTSTPARLQTPEIQRMNKDIEEPDRKSNPVSDSSTLGEDLELPLASADPPRLPSTTVNSQTQTVDVTIVSCCDVSTQTTCHTADVSVQTCKEPQNSKPSSEHQEVDSCPPICPLPQDVNFRECFLKITKERQHHYSSIRSKLDHMVTLLSHKRELVDLTNLPLRPGLNRGRKAQQEARQPNTNIDSGIMGTWPKSRGLQ.

Disordered stretches follow at residues 320 to 372 (TPPS…STLG) and 501 to 534 (GLNR…RGLQ). The span at 329 to 342 (TKPQAERLTSTPAR) shows a compositional bias: polar residues. Positions 350–362 (RMNKDIEEPDRKS) are enriched in basic and acidic residues. A compositionally biased stretch (polar residues) spans 511 to 520 (EARQPNTNID).

Belongs to the FAM83 family.

The protein resides in the cytoplasm. It localises to the cytoskeleton. Its subcellular location is the spindle. The protein localises to the spindle pole. In terms of biological role, may regulate cell proliferation, growth, migration and epithelial to mesenchymal transition. May also be important for proper chromosome congression and alignment during mitosis. The chain is Protein FAM83D from Danio rerio (Zebrafish).